The chain runs to 569 residues: Adenine deaminase (569 aa).

It belongs to the metallo-dependent hydrolases superfamily. Adenine deaminase family. Mn(2+) is required as a cofactor.

It carries out the reaction adenine + H2O + H(+) = hypoxanthine + NH4(+). In Desulfitobacterium hafniense (strain Y51), this protein is Adenine deaminase.